Here is a 116-residue protein sequence, read N- to C-terminus: UPF0134 protein MPN_038 (116 aa).

Belongs to the UPF0134 family.

The protein is UPF0134 protein MPN_038 of Mycoplasma pneumoniae (strain ATCC 29342 / M129 / Subtype 1) (Mycoplasmoides pneumoniae).